Here is a 100-residue protein sequence, read N- to C-terminus: Succinate dehydrogenase subunit 7B, mitochondrial (100 aa).

The tract at residues 1-25 is disordered; that stretch reads MAFLLNNASISSHLRSSSSQKTGDA. The transit peptide at 1–32 directs the protein to the mitochondrion; that stretch reads MAFLLNNASISSHLRSSSSQKTGDALSISRRG. Residues 9 to 19 show a composition bias toward low complexity; it reads SISSHLRSSSS.

In terms of assembly, component of complex II composed of eight subunits in plants: four classical SDH subunits SDH1, SDH2, SDH3 and SDH4 (a flavoprotein (FP), an iron-sulfur protein (IP), and a cytochrome b composed of a large and a small subunit.), as well as four subunits unknown in mitochondria from bacteria and heterotrophic eukaryotes.

Its subcellular location is the mitochondrion inner membrane. It functions in the pathway carbohydrate metabolism; tricarboxylic acid cycle. The protein is Succinate dehydrogenase subunit 7B, mitochondrial of Arabidopsis thaliana (Mouse-ear cress).